We begin with the raw amino-acid sequence, 505 residues long: Probable cytosol aminopeptidase (505 aa).

Mn(2+) is bound by residues K268 and D273. The active site involves K280. D291, D350, and E352 together coordinate Mn(2+). Residue R354 is part of the active site.

The protein belongs to the peptidase M17 family. The cofactor is Mn(2+).

It localises to the cytoplasm. The enzyme catalyses Release of an N-terminal amino acid, Xaa-|-Yaa-, in which Xaa is preferably Leu, but may be other amino acids including Pro although not Arg or Lys, and Yaa may be Pro. Amino acid amides and methyl esters are also readily hydrolyzed, but rates on arylamides are exceedingly low.. It carries out the reaction Release of an N-terminal amino acid, preferentially leucine, but not glutamic or aspartic acids.. Functionally, presumably involved in the processing and regular turnover of intracellular proteins. Catalyzes the removal of unsubstituted N-terminal amino acids from various peptides. The protein is Probable cytosol aminopeptidase of Syntrophobacter fumaroxidans (strain DSM 10017 / MPOB).